Here is an 800-residue protein sequence, read N- to C-terminus: Phenylalanine--tRNA ligase beta subunit (800 aa).

The region spanning 39 to 154 (TKDIKNLVVG…ESQVPGTDAL (116 aa)) is the tRNA-binding domain. The B5 domain occupies 408–483 (AFITPIDITA…RIYGYDDIPS (76 aa)). Mg(2+) contacts are provided by D461, D467, E470, and E471. An FDX-ACB domain is found at 708-800 (PRFPGMSRDI…ALIEQGAVIR (93 aa)).

This sequence belongs to the phenylalanyl-tRNA synthetase beta subunit family. Type 1 subfamily. In terms of assembly, tetramer of two alpha and two beta subunits. Mg(2+) serves as cofactor.

Its subcellular location is the cytoplasm. The enzyme catalyses tRNA(Phe) + L-phenylalanine + ATP = L-phenylalanyl-tRNA(Phe) + AMP + diphosphate + H(+). The polypeptide is Phenylalanine--tRNA ligase beta subunit (Staphylococcus aureus (strain Mu50 / ATCC 700699)).